The following is a 1010-amino-acid chain: Probable LRR receptor-like serine/threonine-protein kinase At3g47570 (1010 aa).

Residues 1–19 (MRLFLLLAFNALMLLETHG) form the signal peptide. The Extracellular segment spans residues 20 to 645 (FTDETDRQAL…SSRLKKVVIG (626 aa)). 2 N-linked (GlcNAc...) asparagine glycosylation sites follow: asparagine 48 and asparagine 88. 10 LRR repeats span residues 89–113 (LSFL…VGQL), 114–137 (SRLE…LYNC), 139–161 (RLLN…LGSL), 162–185 (TNLV…LGNL), 186–209 (TLLE…VAQL), 211–233 (QIWS…LYNL), 234–258 (SSLK…GILL), 259–282 (PNLL…LSNI), 283–307 (STLE…NVPN), and 310–333 (LLFL…TSLT). Asparagine 136 carries N-linked (GlcNAc...) asparagine glycosylation. An N-linked (GlcNAc...) asparagine glycan is attached at asparagine 184. 2 N-linked (GlcNAc...) asparagine glycosylation sites follow: asparagine 221 and asparagine 232. Asparagine 281 and asparagine 294 each carry an N-linked (GlcNAc...) asparagine glycan. 2 N-linked (GlcNAc...) asparagine glycosylation sites follow: asparagine 334 and asparagine 358. 11 LRR repeats span residues 335-359 (CTQL…IANL), 361-384 (AKLV…IGNL), 385-408 (INLQ…LGKL), 410-432 (NLRY…IGNM), 433-455 (TMLE…SLGN), 457-480 (SHLL…IMKI), 481-504 (QQLL…IGAL), 505-528 (QNLG…LGNC), 530-551 (TMES…LKGL), 552-574 (VGVK…YFAS), and 575-600 (FSKL…IFEN). N-linked (GlcNAc...) asparagine glycosylation is found at asparagine 431, asparagine 455, and asparagine 470. 2 N-linked (GlcNAc...) asparagine glycosylation sites follow: asparagine 582 and asparagine 600. The helical transmembrane segment at 646–666 (VSVGITLLLLLFMASVTLIWL) threads the bilayer. The Cytoplasmic portion of the chain corresponds to 667–1010 (RKRKKNKETN…FFKASRTTWR (344 aa)). Phosphothreonine is present on threonine 699. The Protein kinase domain maps to 702–1002 (FSSSNMVGSG…ELISIRERFF (301 aa)). ATP is bound by residues 708-716 (VGSGSFGTV) and lysine 731. 2 positions are modified to phosphotyrosine: tyrosine 781 and tyrosine 826. Aspartate 839 (proton acceptor) is an active-site residue. Phosphotyrosine is present on tyrosine 887.

It belongs to the protein kinase superfamily. Ser/Thr protein kinase family.

It is found in the cell membrane. It catalyses the reaction L-seryl-[protein] + ATP = O-phospho-L-seryl-[protein] + ADP + H(+). The catalysed reaction is L-threonyl-[protein] + ATP = O-phospho-L-threonyl-[protein] + ADP + H(+). This is Probable LRR receptor-like serine/threonine-protein kinase At3g47570 from Arabidopsis thaliana (Mouse-ear cress).